Here is a 628-residue protein sequence, read N- to C-terminus: U-box domain-containing protein 10 (628 aa).

The region spanning 242–316 is the U-box domain; that stretch reads TIPEDFLCPI…SQWCTKHNIE (75 aa). ARM repeat units lie at residues 373-413, 415-454, 456-495, 497-537, and 539-578; these read TDNR…NLSI, EHNK…SLSL, DENK…NLCI, QGNK…VLAS, and QVAK…CLCK.

The enzyme catalyses S-ubiquitinyl-[E2 ubiquitin-conjugating enzyme]-L-cysteine + [acceptor protein]-L-lysine = [E2 ubiquitin-conjugating enzyme]-L-cysteine + N(6)-ubiquitinyl-[acceptor protein]-L-lysine.. It functions in the pathway protein modification; protein ubiquitination. Functionally, functions as an E3 ubiquitin ligase. The polypeptide is U-box domain-containing protein 10 (PUB10) (Arabidopsis thaliana (Mouse-ear cress)).